The sequence spans 348 residues: uncharacterized protein (348 aa).

Functionally, may be involved in apoptosis regulation. This is an uncharacterized protein from Mus musculus (Mouse).